A 141-amino-acid chain; its full sequence is SsrA-binding protein (141 aa).

This sequence belongs to the SmpB family.

The protein resides in the cytoplasm. Its function is as follows. Required for rescue of stalled ribosomes mediated by trans-translation. Binds to transfer-messenger RNA (tmRNA), required for stable association of tmRNA with ribosomes. tmRNA and SmpB together mimic tRNA shape, replacing the anticodon stem-loop with SmpB. tmRNA is encoded by the ssrA gene; the 2 termini fold to resemble tRNA(Ala) and it encodes a 'tag peptide', a short internal open reading frame. During trans-translation Ala-aminoacylated tmRNA acts like a tRNA, entering the A-site of stalled ribosomes, displacing the stalled mRNA. The ribosome then switches to translate the ORF on the tmRNA; the nascent peptide is terminated with the 'tag peptide' encoded by the tmRNA and targeted for degradation. The ribosome is freed to recommence translation, which seems to be the essential function of trans-translation. The sequence is that of SsrA-binding protein from Ureaplasma parvum serovar 3 (strain ATCC 27815 / 27 / NCTC 11736).